A 283-amino-acid chain; its full sequence is Bifunctional protein FolD (283 aa).

NADP(+)-binding positions include 166-168 (GQS), Ser-191, and Ile-232.

It belongs to the tetrahydrofolate dehydrogenase/cyclohydrolase family. In terms of assembly, homodimer.

The catalysed reaction is (6R)-5,10-methylene-5,6,7,8-tetrahydrofolate + NADP(+) = (6R)-5,10-methenyltetrahydrofolate + NADPH. It carries out the reaction (6R)-5,10-methenyltetrahydrofolate + H2O = (6R)-10-formyltetrahydrofolate + H(+). It functions in the pathway one-carbon metabolism; tetrahydrofolate interconversion. Its function is as follows. Catalyzes the oxidation of 5,10-methylenetetrahydrofolate to 5,10-methenyltetrahydrofolate and then the hydrolysis of 5,10-methenyltetrahydrofolate to 10-formyltetrahydrofolate. This Laribacter hongkongensis (strain HLHK9) protein is Bifunctional protein FolD.